The following is a 312-amino-acid chain: Acetylglutamate kinase (312 aa).

Substrate is bound by residues 74–75 (GG), Arg-96, and Asn-195.

It belongs to the acetylglutamate kinase family. ArgB subfamily.

It is found in the cytoplasm. The enzyme catalyses N-acetyl-L-glutamate + ATP = N-acetyl-L-glutamyl 5-phosphate + ADP. Its pathway is amino-acid biosynthesis; L-arginine biosynthesis; N(2)-acetyl-L-ornithine from L-glutamate: step 2/4. Functionally, catalyzes the ATP-dependent phosphorylation of N-acetyl-L-glutamate. This is Acetylglutamate kinase from Nocardioides sp. (strain ATCC BAA-499 / JS614).